Here is a 271-residue protein sequence, read N- to C-terminus: Putative hydro-lyase Mrad2831_3350 (271 aa).

This sequence belongs to the D-glutamate cyclase family.

The protein is Putative hydro-lyase Mrad2831_3350 of Methylobacterium radiotolerans (strain ATCC 27329 / DSM 1819 / JCM 2831 / NBRC 15690 / NCIMB 10815 / 0-1).